The primary structure comprises 926 residues: Protein O-mannosyl-transferase Tmtc3 (926 aa).

The interval Met-1–Ala-26 is disordered. The Cytoplasmic segment spans residues Met-1 to Glu-36. Residues Phe-37–Val-57 form a helical membrane-spanning segment. The Extracellular portion of the chain corresponds to Phe-58–Ala-114. The chain crosses the membrane as a helical span at residues Leu-115–Trp-135. The Cytoplasmic portion of the chain corresponds to Arg-136–Ala-169. Residues Phe-170 to Val-190 form a helical membrane-spanning segment. Over Gly-191–Arg-192 the chain is Extracellular. The helical transmembrane segment at Ala-193–Gly-213 threads the bilayer. At Asp-214–Asn-222 the chain is on the cytoplasmic side. Helical transmembrane passes span Trp-223–Leu-239 and Cys-240–Val-259. Residues His-260–Arg-303 are Cytoplasmic-facing. A helical membrane pass occupies residues Leu-304–Ser-324. Topologically, residues Gln-325–Gln-345 are extracellular. The helical transmembrane segment at Leu-346–Cys-366 threads the bilayer. Topologically, residues Cys-367–Arg-384 are cytoplasmic. A helical transmembrane segment spans residues Asn-385–Thr-405. Over Arg-406 to Gly-419 the chain is Extracellular. The helical transmembrane segment at Trp-420 to Ala-440 threads the bilayer. Residues Glu-441–Arg-442 lie on the Cytoplasmic side of the membrane. The chain crosses the membrane as a helical span at residues Ile-443–Gln-463. Over Arg-464–Ser-926 the chain is Extracellular. TPR repeat units lie at residues Ala-514 to Asp-547, Ile-548 to Ala-581, Leu-596 to Tyr-630, Val-631 to Asn-664, Ala-665 to His-698, Glu-736 to Phe-769, Arg-770 to His-803, Lys-805 to Asn-838, and Thr-839 to Glu-872. N-linked (GlcNAc...) asparagine glycans are attached at residues Asn-609 and Asn-645.

The protein belongs to the TMTC family.

Its subcellular location is the membrane. It localises to the endoplasmic reticulum. It carries out the reaction a di-trans,poly-cis-dolichyl beta-D-mannosyl phosphate + L-seryl-[protein] = 3-O-(alpha-D-mannosyl)-L-seryl-[protein] + a di-trans,poly-cis-dolichyl phosphate + H(+). The catalysed reaction is a di-trans,poly-cis-dolichyl beta-D-mannosyl phosphate + L-threonyl-[protein] = 3-O-(alpha-D-mannosyl)-L-threonyl-[protein] + a di-trans,poly-cis-dolichyl phosphate + H(+). The protein operates within protein modification; protein glycosylation. In terms of biological role, transfers mannosyl residues to the hydroxyl group of serine or threonine residues. The polypeptide is Protein O-mannosyl-transferase Tmtc3 (Drosophila melanogaster (Fruit fly)).